Reading from the N-terminus, the 302-residue chain is Sulfate adenylyltransferase subunit 2 (302 aa).

The protein belongs to the PAPS reductase family. CysD subfamily. In terms of assembly, heterodimer composed of CysD, the smaller subunit, and CysN.

The enzyme catalyses sulfate + ATP + H(+) = adenosine 5'-phosphosulfate + diphosphate. Its pathway is sulfur metabolism; hydrogen sulfide biosynthesis; sulfite from sulfate: step 1/3. With CysN forms the ATP sulfurylase (ATPS) that catalyzes the adenylation of sulfate producing adenosine 5'-phosphosulfate (APS) and diphosphate, the first enzymatic step in sulfur assimilation pathway. APS synthesis involves the formation of a high-energy phosphoric-sulfuric acid anhydride bond driven by GTP hydrolysis by CysN coupled to ATP hydrolysis by CysD. This is Sulfate adenylyltransferase subunit 2 from Xanthomonas axonopodis pv. citri (strain 306).